Here is a 199-residue protein sequence, read N- to C-terminus: dITP/XTP pyrophosphatase (199 aa).

Threonine 7 to lysine 12 serves as a coordination point for substrate. Aspartate 68 functions as the Proton acceptor in the catalytic mechanism. Aspartate 68 serves as a coordination point for Mg(2+). Residues serine 69, phenylalanine 153 to aspartate 156, lysine 176, and histidine 181 to arginine 182 contribute to the substrate site.

This sequence belongs to the HAM1 NTPase family. In terms of assembly, homodimer. Mg(2+) serves as cofactor.

It carries out the reaction XTP + H2O = XMP + diphosphate + H(+). The enzyme catalyses dITP + H2O = dIMP + diphosphate + H(+). It catalyses the reaction ITP + H2O = IMP + diphosphate + H(+). Its function is as follows. Pyrophosphatase that catalyzes the hydrolysis of nucleoside triphosphates to their monophosphate derivatives, with a high preference for the non-canonical purine nucleotides XTP (xanthosine triphosphate), dITP (deoxyinosine triphosphate) and ITP. Seems to function as a house-cleaning enzyme that removes non-canonical purine nucleotides from the nucleotide pool, thus preventing their incorporation into DNA/RNA and avoiding chromosomal lesions. This is dITP/XTP pyrophosphatase from Halorhodospira halophila (strain DSM 244 / SL1) (Ectothiorhodospira halophila (strain DSM 244 / SL1)).